We begin with the raw amino-acid sequence, 181 residues long: Alkyl hydroperoxide reductase AhpD (181 aa).

C131 (proton donor) is an active-site residue. The cysteines at positions 131 and 134 are disulfide-linked. C134 functions as the Cysteine sulfenic acid (-SOH) intermediate in the catalytic mechanism.

This sequence belongs to the AhpD family.

It carries out the reaction N(6)-[(R)-dihydrolipoyl]-L-lysyl-[lipoyl-carrier protein] + a hydroperoxide = N(6)-[(R)-lipoyl]-L-lysyl-[lipoyl-carrier protein] + an alcohol + H2O. In terms of biological role, antioxidant protein with alkyl hydroperoxidase activity. Required for the reduction of the AhpC active site cysteine residues and for the regeneration of the AhpC enzyme activity. The sequence is that of Alkyl hydroperoxide reductase AhpD from Bradyrhizobium sp. (strain ORS 278).